The sequence spans 213 residues: Imidazole glycerol phosphate synthase subunit HisH (213 aa).

Residues 6-213 (LVTVIDYGMG…FKNFLNWNGQ (208 aa)) enclose the Glutamine amidotransferase type-1 domain. Cys86 functions as the Nucleophile in the catalytic mechanism. Residues His192 and Glu194 contribute to the active site.

In terms of assembly, heterodimer of HisH and HisF.

It localises to the cytoplasm. It catalyses the reaction 5-[(5-phospho-1-deoxy-D-ribulos-1-ylimino)methylamino]-1-(5-phospho-beta-D-ribosyl)imidazole-4-carboxamide + L-glutamine = D-erythro-1-(imidazol-4-yl)glycerol 3-phosphate + 5-amino-1-(5-phospho-beta-D-ribosyl)imidazole-4-carboxamide + L-glutamate + H(+). The catalysed reaction is L-glutamine + H2O = L-glutamate + NH4(+). The protein operates within amino-acid biosynthesis; L-histidine biosynthesis; L-histidine from 5-phospho-alpha-D-ribose 1-diphosphate: step 5/9. Its function is as follows. IGPS catalyzes the conversion of PRFAR and glutamine to IGP, AICAR and glutamate. The HisH subunit catalyzes the hydrolysis of glutamine to glutamate and ammonia as part of the synthesis of IGP and AICAR. The resulting ammonia molecule is channeled to the active site of HisF. This is Imidazole glycerol phosphate synthase subunit HisH from Hydrogenovibrio crunogenus (strain DSM 25203 / XCL-2) (Thiomicrospira crunogena).